The following is a 223-amino-acid chain: uncharacterized protein (223 aa).

The protein localises to the plastid. It localises to the chloroplast. This is an uncharacterized protein from Mesostigma viride (Green alga).